Reading from the N-terminus, the 282-residue chain is Acetylglutamate kinase (282 aa).

Substrate contacts are provided by residues 62–63 (GG), Arg84, and Asn178.

It belongs to the acetylglutamate kinase family. ArgB subfamily.

Its subcellular location is the cytoplasm. The catalysed reaction is N-acetyl-L-glutamate + ATP = N-acetyl-L-glutamyl 5-phosphate + ADP. The protein operates within amino-acid biosynthesis; L-arginine biosynthesis; N(2)-acetyl-L-ornithine from L-glutamate: step 2/4. Functionally, catalyzes the ATP-dependent phosphorylation of N-acetyl-L-glutamate. This Thermotoga neapolitana (strain ATCC 49049 / DSM 4359 / NBRC 107923 / NS-E) protein is Acetylglutamate kinase.